Consider the following 256-residue polypeptide: Thiazole synthase (256 aa).

Residue K95 is the Schiff-base intermediate with DXP of the active site. 1-deoxy-D-xylulose 5-phosphate-binding positions include G156, 182-183 (AG), and 204-205 (NT).

It belongs to the ThiG family. As to quaternary structure, homotetramer. Forms heterodimers with either ThiH or ThiS.

The protein resides in the cytoplasm. It carries out the reaction [ThiS sulfur-carrier protein]-C-terminal-Gly-aminoethanethioate + 2-iminoacetate + 1-deoxy-D-xylulose 5-phosphate = [ThiS sulfur-carrier protein]-C-terminal Gly-Gly + 2-[(2R,5Z)-2-carboxy-4-methylthiazol-5(2H)-ylidene]ethyl phosphate + 2 H2O + H(+). It functions in the pathway cofactor biosynthesis; thiamine diphosphate biosynthesis. In terms of biological role, catalyzes the rearrangement of 1-deoxy-D-xylulose 5-phosphate (DXP) to produce the thiazole phosphate moiety of thiamine. Sulfur is provided by the thiocarboxylate moiety of the carrier protein ThiS. In vitro, sulfur can be provided by H(2)S. This chain is Thiazole synthase, found in Klebsiella pneumoniae (strain 342).